A 1076-amino-acid chain; its full sequence is DNA-directed RNA polymerase subunit beta (1076 aa).

The protein belongs to the RNA polymerase beta chain family. As to quaternary structure, in plastids the minimal PEP RNA polymerase catalytic core is composed of four subunits: alpha, beta, beta', and beta''. When a (nuclear-encoded) sigma factor is associated with the core the holoenzyme is formed, which can initiate transcription.

The protein localises to the plastid. Its subcellular location is the chloroplast. The enzyme catalyses RNA(n) + a ribonucleoside 5'-triphosphate = RNA(n+1) + diphosphate. Its function is as follows. DNA-dependent RNA polymerase catalyzes the transcription of DNA into RNA using the four ribonucleoside triphosphates as substrates. The protein is DNA-directed RNA polymerase subunit beta of Lolium perenne (Perennial ryegrass).